A 377-amino-acid polypeptide reads, in one-letter code: Spermidine/putrescine import ATP-binding protein PotA (377 aa).

The region spanning 18 to 248 (IRLSGISKSF…PKNLFVARFI (231 aa)) is the ABC transporter domain. 50-57 (GPSGCGKT) provides a ligand contact to ATP.

This sequence belongs to the ABC transporter superfamily. Spermidine/putrescine importer (TC 3.A.1.11.1) family. The complex is composed of two ATP-binding proteins (PotA), two transmembrane proteins (PotB and PotC) and a solute-binding protein (PotD).

The protein localises to the cell inner membrane. It catalyses the reaction ATP + H2O + polyamine-[polyamine-binding protein]Side 1 = ADP + phosphate + polyamineSide 2 + [polyamine-binding protein]Side 1.. In terms of biological role, part of the ABC transporter complex PotABCD involved in spermidine/putrescine import. Responsible for energy coupling to the transport system. The polypeptide is Spermidine/putrescine import ATP-binding protein PotA (Vibrio parahaemolyticus serotype O3:K6 (strain RIMD 2210633)).